The chain runs to 237 residues: Uridylate kinase (237 aa).

Position 12 to 15 (12 to 15) interacts with ATP; the sequence is KLSG. An involved in allosteric activation by GTP region spans residues 20 to 25; that stretch reads GEDGLG. G54 serves as a coordination point for UMP. The ATP site is built by G55 and R59. Residues D74 and 135–142 contribute to the UMP site; that span reads TGNPFFTT. Residues T162, Y168, and D171 each contribute to the ATP site.

It belongs to the UMP kinase family. In terms of assembly, homohexamer.

The protein resides in the cytoplasm. It catalyses the reaction UMP + ATP = UDP + ADP. The protein operates within pyrimidine metabolism; CTP biosynthesis via de novo pathway; UDP from UMP (UMPK route): step 1/1. With respect to regulation, allosterically activated by GTP. Inhibited by UTP. In terms of biological role, catalyzes the reversible phosphorylation of UMP to UDP. The chain is Uridylate kinase from Haemophilus influenzae (strain PittEE).